Here is a 474-residue protein sequence, read N- to C-terminus: Glutamate--tRNA ligase 2 (474 aa).

The 'HIGH' region motif lies at 16 to 26; it reads PSPTGFLHIGG. Residues 245-249 carry the 'KMSKS' region motif; the sequence is KLSKR. Lysine 248 is a binding site for ATP.

The protein belongs to the class-I aminoacyl-tRNA synthetase family. Glutamate--tRNA ligase type 1 subfamily. In terms of assembly, monomer.

It is found in the cytoplasm. It carries out the reaction tRNA(Glu) + L-glutamate + ATP = L-glutamyl-tRNA(Glu) + AMP + diphosphate. Catalyzes the attachment of glutamate to tRNA(Glu) in a two-step reaction: glutamate is first activated by ATP to form Glu-AMP and then transferred to the acceptor end of tRNA(Glu). This is Glutamate--tRNA ligase 2 from Rhizorhabdus wittichii (strain DSM 6014 / CCUG 31198 / JCM 15750 / NBRC 105917 / EY 4224 / RW1) (Sphingomonas wittichii).